The chain runs to 316 residues: Gene 34 protein (316 aa).

It belongs to the herpesviridae UL95 family.

The protein is Gene 34 protein (34) of Saimiriine herpesvirus 2 (strain 11) (SaHV-2).